We begin with the raw amino-acid sequence, 292 residues long: RNA polymerase II transcriptional coactivator SUB1 (292 aa).

2 disordered regions span residues 1 to 31 (MSYY…GGMP) and 117 to 292 (LLSD…SEEE). The segment covering 20-31 (LSNSNNNNGGMP) has biased composition (low complexity). S119 bears the Phosphoserine mark. Composition is skewed to basic and acidic residues over residues 133 to 166 (NNDK…LEPR), 179 to 191 (PHEE…EREA), 204 to 240 (KQQE…KIAE), and 251 to 267 (AKKE…KDAN). 3 positions are modified to phosphoserine: S268, S269, and S289.

This sequence belongs to the transcriptional coactivator PC4 family.

It localises to the nucleus. In terms of biological role, plays a role in the release of TFIIB from the transcription complex during transcription initiation. Binds to TFIIB and specifically inhibits the formation of the TBP-TFIIB-promoter complexes. In Saccharomyces cerevisiae (strain ATCC 204508 / S288c) (Baker's yeast), this protein is RNA polymerase II transcriptional coactivator SUB1 (SUB1).